Consider the following 685-residue polypeptide: Probable transcriptional regulator SLK3 (685 aa).

2 disordered regions span residues 25 to 66 (NLPG…ENSY) and 108 to 129 (LQQQ…SQRL). Low complexity predominate over residues 39-56 (QHLPQQQQRQLLEQQAGQ). The dimerization stretch occupies residues 176–423 (PAENCITYWR…EHKVGPLEGL (248 aa)). The Nuclear localization signal motif lies at 185 to 199 (RKFVAEYFSPRAKQR). Positions 447 to 459 (GNSGAMSGPAQAQ) are enriched in polar residues. 3 disordered regions span residues 447–491 (GNSG…MNGS), 512–591 (NNQN…NTQE), and 611–658 (QQQA…NNLP). Residues 460 to 471 (MTLSSGTMSGST) are compositionally biased toward low complexity. Residues 512–524 (NNQNSNTGNQEGF) show a composition bias toward polar residues. A compositionally biased stretch (low complexity) spans 525–543 (SSQNPTLNSNQSPSSSSQQ). 3 stretches are compositionally biased toward polar residues: residues 544–588 (RENL…SHGN), 611–636 (QQQA…TSNI), and 645–658 (RINS…NNLP).

It belongs to the adn1/SEU family.

It localises to the nucleus. In terms of biological role, probable transcription regulator that functions in the development of the carpel margin meristem similarly to SEUSS (SEU). In association with SEU, supports organ development from meristematic regions by facilitating auxin response and thus organ initiation, and by sustaining meristematic potential through the maintenance of PHABULOSA expression. The polypeptide is Probable transcriptional regulator SLK3 (SLK3) (Arabidopsis thaliana (Mouse-ear cress)).